The sequence spans 314 residues: CBASS oligonucleotide cyclase CdnC (314 aa).

Lys60 contributes to the ATP binding site. Mg(2+) is bound by residues Asp73 and Asp75. ATP contacts are provided by residues Asp75, Lys186, 197–199 (KSF), and Asn263.

This sequence belongs to the CD-NTase family. C01 subfamily. As to quaternary structure, forms complexes with Cap7 with 1:1 and 2:2 stoichimetry, and a 1:1:6 CdnC:Cap7:Cap6 complex. Mg(2+) is required as a cofactor.

Functionally, cyclic nucleotide synthase (second messenger synthase) of a CBASS antivirus system. CBASS (cyclic oligonucleotide-based antiphage signaling system) provides immunity against bacteriophage. The CD-NTase protein synthesizes cyclic nucleotides in response to infection; these serve as specific second messenger signals. The signals activate a diverse range of effectors, leading to bacterial cell death and thus abortive phage infection. A type III CBASS system. Expression of this CBASS system (Cap18-Cap6-Cap7-CdnC-CapW-Cap17) in a susceptible E.coli (strain MG1655) confers resistance to bacteriophage P1. Probable cyclic nucleotide synthase that upon activation catalyzes the synthesis of a cyclic nucleotide. A cyclase activity for this enzyme was not identified in. The chain is CBASS oligonucleotide cyclase CdnC from Escherichia coli (strain KTE188).